The chain runs to 352 residues: MYTPIPQSGSPFPASVQDPGLHIWRVEKLKPVPIARESHGIFFSGDSYLVLHNGPEEASHLHLWIGQQSSRDEQGACAVLAVHLNTLLGERPVQHREVQGNESDLFMSYFPRGLKYYREGGVESAFHKTTSGARGAAIRKLYQVKGKKNIRATERPLSWDSFNTGDCFILDLGQNIFAWCGGKSNILERNKARDLALAIRDSERQGKAQVEIITDGEEPAEMIQVLGPKPALKEGNPEEDITADQTRPNAQAAALYKVSDATGQMNLTKVADSSPFASELLIPDDCFVLDNGLCAQIYIWKGRKANEKERQAALQVADGFISRMRYSPNTQVEILPQGRESPIFKQFFKNWK.

Position 1 is an N-acetylmethionine (methionine 1). One copy of the Gelsolin-like 1 repeat lies at 27 to 75 (EKLKPVPIARESHGIFFSGDSYLVLHNGPEEASHLHLWIGQQSSRDEQG). Residues 139-148 (RKLYQVKGKK) carry the Nuclear localization signal motif. Gelsolin-like repeat units follow at residues 150-190 (IRAT…LERN) and 265-311 (MNLT…KERQ). Serine 341 is modified (phosphoserine).

This sequence belongs to the villin/gelsolin family. Interacts with NUP62. Interacts with NUTF2 and RAN; involved in CAPG nuclear import. Phosphorylated. Nuclear GCAP39 is more highly phosphorylated than cytoplasmic GCAP39. In terms of tissue distribution, present in a large variety of tissues and is particularly abundant in kidney and lung. Highly expressed in macrophages (at protein level).

It localises to the nucleus. Its subcellular location is the cytoplasm. The protein resides in the melanosome. It is found in the cell projection. The protein localises to the lamellipodium. It localises to the ruffle. Its function is as follows. Calcium-sensitive protein which reversibly blocks the barbed ends of actin filaments but does not sever preformed actin filaments. May play an important role in macrophage function. May play a role in regulating cytoplasmic and/or nuclear structures through potential interactions with actin. May bind DNA. Uncapping occurs either when Ca(2+) falls or when the concentration of polyphosphoinositide rises, both at low and high Ca(2+). This Mus musculus (Mouse) protein is Macrophage-capping protein (Capg).